Reading from the N-terminus, the 58-residue chain is Keratin-associated protein 19-9b (58 aa).

Residues G6–Y52 form a 12 X 2 AA repeats of G-[YCGS] region.

This sequence belongs to the KRTAP type 19 family. In terms of assembly, interacts with hair keratins.

Functionally, in the hair cortex, hair keratin intermediate filaments are embedded in an interfilamentous matrix, consisting of hair keratin-associated proteins (KRTAP), which are essential for the formation of a rigid and resistant hair shaft through their extensive disulfide bond cross-linking with abundant cysteine residues of hair keratins. The matrix proteins include the high-sulfur and high-glycine-tyrosine keratins. The sequence is that of Keratin-associated protein 19-9b (Krtap19-9b) from Mus musculus (Mouse).